Reading from the N-terminus, the 287-residue chain is Flagellin (287 aa).

The protein belongs to the bacterial flagellin family.

It localises to the secreted. It is found in the bacterial flagellum. Flagellin is the subunit protein which polymerizes to form the filaments of bacterial flagella. This chain is Flagellin (flaA), found in Listeria innocua serovar 6a (strain ATCC BAA-680 / CLIP 11262).